We begin with the raw amino-acid sequence, 436 residues long: UPF0597 protein YhaM (436 aa).

The protein belongs to the UPF0597 family.

The polypeptide is UPF0597 protein YhaM (Shigella flexneri serotype 5b (strain 8401)).